Consider the following 227-residue polypeptide: N-(5'-phosphoribosyl)anthranilate isomerase (227 aa).

Belongs to the TrpF family.

The catalysed reaction is N-(5-phospho-beta-D-ribosyl)anthranilate = 1-(2-carboxyphenylamino)-1-deoxy-D-ribulose 5-phosphate. It functions in the pathway amino-acid biosynthesis; L-tryptophan biosynthesis; L-tryptophan from chorismate: step 3/5. The protein is N-(5'-phosphoribosyl)anthranilate isomerase of Herminiimonas arsenicoxydans.